The primary structure comprises 193 residues: Cysteine and glycine-rich protein 2 (193 aa).

The region spanning 10–61 (CGACGRTVYHAEEVQCDGRSFHRCCFLCMVCRKNLDSTTVAIHDEEIYCKSC) is the LIM zinc-binding 1 domain. The short motif at 64-69 (KKYGPK) is the Nuclear localization signal element. Residue Lys91 forms a Glycyl lysine isopeptide (Lys-Gly) (interchain with G-Cter in SUMO2) linkage. N6-acetyllysine is present on residues Lys112 and Lys131. The 52-residue stretch at 119–170 (CSRCGDSVYAAEKIIGAGKPWHKNCFRCAKCGKSLESTTLTEKEGEIYCKGC) folds into the LIM zinc-binding 2 domain. Lys137 is modified (N6-acetyllysine; alternate). Lys137 carries the N6-succinyllysine; alternate modification. At Lys161 the chain carries N6-acetyllysine.

Interacts with KAT14. The LIM domain 1 is necessary and sufficient for this interaction. Interacts with GLRX3.

Its subcellular location is the nucleus. Drastically down-regulated in response to PDGF-BB or cell injury, that promote smooth muscle cell proliferation and dedifferentiation. Seems to play a role in the development of the embryonic vascular system. This is Cysteine and glycine-rich protein 2 (Csrp2) from Mus musculus (Mouse).